Consider the following 334-residue polypeptide: ADP-L-glycero-D-manno-heptose-6-epimerase (334 aa).

Residues 11 to 12 (FI), 32 to 33 (DN), K39, K54, 77 to 81 (QGACS), and N94 contribute to the NADP(+) site. Catalysis depends on Y141, which acts as the Proton acceptor. NADP(+) is bound at residue K145. N171 provides a ligand contact to substrate. NADP(+) contacts are provided by V172 and K180. K180 serves as the catalytic Proton acceptor. Substrate is bound by residues R182, H189, 203–206 (FGSN), R216, and Y295.

It belongs to the NAD(P)-dependent epimerase/dehydratase family. HldD subfamily. In terms of assembly, homopentamer. Requires NADP(+) as cofactor.

The enzyme catalyses ADP-D-glycero-beta-D-manno-heptose = ADP-L-glycero-beta-D-manno-heptose. Its pathway is nucleotide-sugar biosynthesis; ADP-L-glycero-beta-D-manno-heptose biosynthesis; ADP-L-glycero-beta-D-manno-heptose from D-glycero-beta-D-manno-heptose 7-phosphate: step 4/4. Its function is as follows. Catalyzes the interconversion between ADP-D-glycero-beta-D-manno-heptose and ADP-L-glycero-beta-D-manno-heptose via an epimerization at carbon 6 of the heptose. The sequence is that of ADP-L-glycero-D-manno-heptose-6-epimerase from Neisseria meningitidis serogroup C / serotype 2a (strain ATCC 700532 / DSM 15464 / FAM18).